Consider the following 286-residue polypeptide: Undecaprenyl-diphosphatase (286 aa).

Transmembrane regions (helical) follow at residues 5–25 (WFIIKAIIIGIVEGITEFLPV), 55–75 (IDAFTMIIQLGAILAIVVLYW), 92–112 (SGFKFWLNIAVSAVPAGVLGL), 122–142 (LFNPGSVTAALIVGAIWMIFA), 185–205 (IIGAWIVGLSTVAAAEFSFFL), 229–249 (MHIVGLTVGFIVSFIVALIVV), and 264–284 (FAMYRILLGIVLIILSLFNVI).

It belongs to the UppP family.

It is found in the cell membrane. The catalysed reaction is di-trans,octa-cis-undecaprenyl diphosphate + H2O = di-trans,octa-cis-undecaprenyl phosphate + phosphate + H(+). Its function is as follows. Catalyzes the dephosphorylation of undecaprenyl diphosphate (UPP). Confers resistance to bacitracin. The protein is Undecaprenyl-diphosphatase of Clostridium novyi (strain NT).